A 170-amino-acid chain; its full sequence is Peptide deformylase (170 aa).

Residues Cys-91 and His-133 each coordinate Fe cation. Glu-134 is a catalytic residue. Position 137 (His-137) interacts with Fe cation.

The protein belongs to the polypeptide deformylase family. It depends on Fe(2+) as a cofactor.

It carries out the reaction N-terminal N-formyl-L-methionyl-[peptide] + H2O = N-terminal L-methionyl-[peptide] + formate. Functionally, removes the formyl group from the N-terminal Met of newly synthesized proteins. Requires at least a dipeptide for an efficient rate of reaction. N-terminal L-methionine is a prerequisite for activity but the enzyme has broad specificity at other positions. The protein is Peptide deformylase of Actinobacillus pleuropneumoniae serotype 7 (strain AP76).